The sequence spans 640 residues: SH3 domain-containing protein 21 (640 aa).

Residues 1–60 (MVQSELQLQPRAGGRAEAASWGDRGNDKGGLGNPDMPSVSPGPQRPPKLSSLAYDSPPDY) are disordered. The 62-residue stretch at 65–126 (SHPEVYRVLF…PDNFVLPPPP (62 aa)) folds into the SH3 domain. Disordered stretches follow at residues 133-361 (RKVV…PLGD), 401-551 (YFVA…PDSQ), and 618-640 (VQVMQGTQKSQTPRVIHTQTQTY). The segment covering 177–186 (PSRDSQKLTS) has biased composition (basic and acidic residues). Polar residues predominate over residues 210–220 (TQTPQQRSVSS). 3 stretches are compositionally biased toward basic and acidic residues: residues 401-416 (YFVAKEDPSSQEEAHT), 459-469 (ALEKPHPHEEA), and 494-532 (RPLREEVLPKEGVASKEEVTLKEELPPKEEVAPKEEVPP). Residues 572–626 (VDVTSLRGEVESLRRALELMEVQLERKLTDIWEELKSEKEQRRRLEVQVMQGTQK) are a coiled coil. Positions 621-640 (MQGTQKSQTPRVIHTQTQTY) are enriched in polar residues.

The protein is SH3 domain-containing protein 21 (SH3D21) of Homo sapiens (Human).